We begin with the raw amino-acid sequence, 274 residues long: NH(3)-dependent NAD(+) synthetase (274 aa).

G46 to S53 is an ATP binding site. Mg(2+) is bound at residue D52. R140 contacts deamido-NAD(+). T160 is a binding site for ATP. A Mg(2+)-binding site is contributed by E165. K173 and D180 together coordinate deamido-NAD(+). The ATP site is built by K189 and T211. H260–K261 lines the deamido-NAD(+) pocket.

It belongs to the NAD synthetase family. As to quaternary structure, homodimer.

The catalysed reaction is deamido-NAD(+) + NH4(+) + ATP = AMP + diphosphate + NAD(+) + H(+). It participates in cofactor biosynthesis; NAD(+) biosynthesis; NAD(+) from deamido-NAD(+) (ammonia route): step 1/1. Functionally, catalyzes the ATP-dependent amidation of deamido-NAD to form NAD. Uses ammonia as a nitrogen source. The chain is NH(3)-dependent NAD(+) synthetase from Streptococcus pyogenes serotype M18 (strain MGAS8232).